The following is a 617-amino-acid chain: Vacuolar protein sorting-associated protein 33B (617 aa).

An N-acetylalanine modification is found at alanine 2.

Belongs to the STXBP/unc-18/SEC1 family. In terms of assembly, interacts with RAB11A and VIPAS39. Interacts with RAB25. Associates with adapter protein complex 3 (AP-3), clathrin:AP-3 and clathrin:HGS complexes. As to quaternary structure, (Microbial infection) Interacts with M.tuberculosis PtpA. In terms of processing, phosphorylated on tyrosine residues. Post-translationally, (Microbial infection) Dephosphorylated by M.tuberculosis PtpA, which induces the reduction of host phagolysosome fusion in M.tuberculosis-infected macrophages. In terms of tissue distribution, ubiquitous; highly expressed in testis and low expression in the lung.

It localises to the late endosome membrane. The protein resides in the lysosome membrane. It is found in the early endosome. Its subcellular location is the cytoplasmic vesicle. The protein localises to the clathrin-coated vesicle. It localises to the recycling endosome. In terms of biological role, may play a role in vesicle-mediated protein trafficking to lysosomal compartments and in membrane docking/fusion reactions of late endosomes/lysosomes. Required for proper trafficking and targeting of the collagen-modifying enzyme lysyl hydroxylase 3 (LH3) to intracellular collagen. Mediates phagolysosomal fusion in macrophages. Proposed to be involved in endosomal maturation implicating VIPAS39. In epithelial cells, the VPS33B:VIPAS39 complex may play a role in the apical recycling pathway and in the maintenance of the apical-basolateral polarity. Seems to be involved in the sorting of specific cargos from the trans-Golgi network to alpha-granule-destined multivesicular bodies (MVBs) promoting MVBs maturation in megakaryocytes. The protein is Vacuolar protein sorting-associated protein 33B (VPS33B) of Homo sapiens (Human).